A 391-amino-acid polypeptide reads, in one-letter code: Probable FAD-dependent oxidoreductase PA4991 (391 aa).

FAD-binding positions include Ala17, Glu36, 44–45, 49–51, and 346–347; these read QS, QGI, and LA.

This sequence belongs to the DAO family. In terms of assembly, monomer. The cofactor is FAD.

Functionally, probably functions as a FAD-dependent oxidoreductase, whose physiological substrate is unknown. Does not display amino-acid oxidase or glycerol-3-phosphate dehydrogenase activities. Is essential for growth of P.aeruginosa in the sputum of cystic fibrosis patients. The protein is Probable FAD-dependent oxidoreductase PA4991 of Pseudomonas aeruginosa (strain ATCC 15692 / DSM 22644 / CIP 104116 / JCM 14847 / LMG 12228 / 1C / PRS 101 / PAO1).